The chain runs to 214 residues: UPF0690 protein C1orf52 homolog (214 aa).

Disordered regions lie at residues 1 to 66 (MSDE…SVSK) and 81 to 214 (DSRA…QCLD). Residues 32–44 (PEATASSAPAEPQ) show a composition bias toward low complexity. Basic and acidic residues-rich tracts occupy residues 49–61 (RAAE…DELF) and 81–97 (DSRA…EFKV). The segment covering 152-165 (EEEEEEQQPDSDDD) has biased composition (acidic residues). Ser162 is modified (phosphoserine). Basic and acidic residues-rich tracts occupy residues 179-192 (VETF…KRDI) and 200-214 (NFVE…QCLD).

This sequence belongs to the UPF0690 family.

This chain is UPF0690 protein C1orf52 homolog, found in Danio rerio (Zebrafish).